Here is a 30-residue protein sequence, read N- to C-terminus: Dermaseptin-J10 (30 aa).

As to expression, expressed by the skin glands.

It localises to the secreted. Its function is as follows. Has antimicrobial activity. This is Dermaseptin-J10 from Phasmahyla jandaia (Jandaia leaf frog).